Consider the following 150-residue polypeptide: uncharacterized protein (150 aa).

This is an uncharacterized protein from Streptomyces lincolnensis.